The sequence spans 71 residues: Large ribosomal subunit protein eL38 (71 aa).

Belongs to the eukaryotic ribosomal protein eL38 family.

This chain is Large ribosomal subunit protein eL38 (RpL38), found in Argas monolakensis (Mono lake bird tick).